Consider the following 303-residue polypeptide: MKKQALICALLATVLLPGCSEDGENTPQPTDGRVALEATSGIRMNTRAYDKTWEAGDAIGIYMLNGDATDGNGNRKYTTAQTAENGSFTAAEGQTIYFPVDASQRDFVAYYPYRETLADGNVYTVDVSVQTPQKDIDLMGAAKVEGKDKTDPKVAFVFTHKLVKLDITIKADGTSLTDADLAGTTVSISNQQTAATYNVVTGGDATVTTGTTKEIVLHTDGLKAEGIVLPAASTAGMALTFTVPGLEGQAFHWDVNSAAQSKAFVAGSKYLYTITISKAGVEVSSKVEDWTPGNGGGETGNAE.

The first 22 residues, 1 to 22 (MKKQALICALLATVLLPGCSED), serve as a signal peptide directing secretion.

It belongs to the bacteroidetes fimbrillin superfamily. Mfa-like family. In terms of assembly, may be part of the fimbrial tip.

It is found in the fimbrium. Putative component of the fimbrium tip. Fimbriae are filamentous appendages on the cell surface that mediate cell adhesion and biofilm formation. The polypeptide is Putative fimbrium subunit Fim1C (fim1C) (Bacteroides uniformis (strain ATCC 8492 / DSM 6597 / CCUG 4942 / CIP 103695 / JCM 5828 / KCTC 5204 / NCTC 13054 / VPI 0061)).